A 246-amino-acid polypeptide reads, in one-letter code: Flagellar brake protein YcgR (246 aa).

Positions 122–234 (QRREFFRIQT…PMETIIQRYV (113 aa)) constitute a PilZ domain.

This sequence belongs to the YcgR family. Monomer. Interacts with the flagellar basal bodies.

Its subcellular location is the bacterial flagellum basal body. In terms of biological role, acts as a flagellar brake, regulating swimming and swarming in a bis-(3'-5') cyclic diguanylic acid (c-di-GMP)-dependent manner. Binds 1 c-di-GMP dimer per subunit. Increasing levels of c-di-GMP lead to decreased motility. The sequence is that of Flagellar brake protein YcgR from Chromobacterium violaceum (strain ATCC 12472 / DSM 30191 / JCM 1249 / CCUG 213 / NBRC 12614 / NCIMB 9131 / NCTC 9757 / MK).